The primary structure comprises 443 residues: Adenylate cyclase (443 aa).

The next 6 helical transmembrane spans lie at 47-69 (VLTI…QLAT), 74-93 (WYIA…VPLL), 98-120 (GLVA…GWDV), 124-143 (AGAQ…LVGI), 148-167 (LAVG…EFLV), and 180-202 (SVSF…WFAL). Residues 203-443 (RDTARAEAVM…RGAEPRTAGV (241 aa)) lie on the Cytoplasmic side of the membrane. Positions 251–378 (SVLFADIVGF…DAVNVASRME (128 aa)) constitute a Guanylate cyclase domain. Mg(2+)-binding residues include Asp-256 and Asp-300.

The protein belongs to the adenylyl cyclase class-4/guanylyl cyclase family. In terms of assembly, homodimer. Can also exist as monomer. Mg(2+) serves as cofactor. The cofactor is Mn(2+).

Its subcellular location is the cell membrane. The catalysed reaction is ATP = 3',5'-cyclic AMP + diphosphate. This chain is Adenylate cyclase (cya), found in Mycobacterium bovis (strain ATCC BAA-935 / AF2122/97).